The following is a 268-amino-acid chain: Esterase PIR7B (268 aa).

Serine 86 serves as the catalytic Acyl-ester intermediate. Residues aspartate 218 and histidine 246 each act as charge relay system in the active site.

This sequence belongs to the AB hydrolase superfamily.

In terms of biological role, exhibits esterase activity towards naphthol AS-acetate in vitro. The protein is Esterase PIR7B (PIR7B) of Oryza sativa subsp. japonica (Rice).